The sequence spans 723 residues: DNA-binding protein RFX2 (723 aa).

Positions 1–46 are disordered; sequence MQNSEGGADSPASVALRPSAAAPPVPASPQRVLVQAASSAPKGAQM. Positions 10–20 are enriched in low complexity; that stretch reads SPASVALRPSA. Ser28 carries the phosphoserine modification. Positions 199–274 form a DNA-binding region, RFX-type winged-helix; the sequence is HLQWLLDNYE…YHYYGIRLKP (76 aa). The segment at 292 to 332 is disordered; it reads QQPMHQKPRYRPAQKTDSLGDSGSHSSLHSTPEQTMAAQSQ. Residues 307–322 are compositionally biased toward low complexity; it reads TDSLGDSGSHSSLHST. The segment covering 323–332 has biased composition (polar residues); it reads PEQTMAAQSQ. Ser416 is subject to Phosphoserine. The disordered stretch occupies residues 689–723; it reads GDERRGSEAGPDAHSLGEPLVKRERSDPNHSLQGI.

This sequence belongs to the RFX family. In terms of assembly, homodimer; probably only forms homodimers in testis. Heterodimer; heterodimerizes with RFX1 and RFX3.

Its subcellular location is the nucleus. It is found in the cytoplasm. Functionally, transcription factor that acts as a key regulator of spermatogenesis. Acts by regulating expression of genes required for the haploid phase during spermiogenesis, such as genes required for cilium assembly and function. Recognizes and binds the X-box, a regulatory motif with DNA sequence 5'-GTNRCC(0-3N)RGYAAC-3' present on promoters. Probably activates transcription of the testis-specific histone gene H1-6. This is DNA-binding protein RFX2 (RFX2) from Macaca fascicularis (Crab-eating macaque).